We begin with the raw amino-acid sequence, 146 residues long: Phospholipase A2 PS22 (146 aa).

The signal sequence occupies residues 1–19 (MYPAHLLVLLAVCVSLLGA). Residues 20 to 27 (ASVPPQPL) constitute a propeptide that is removed on maturation. Intrachain disulfides connect Cys-38–Cys-98, Cys-54–Cys-145, Cys-56–Cys-72, Cys-71–Cys-126, Cys-78–Cys-119, Cys-87–Cys-112, and Cys-105–Cys-117. 3 residues coordinate Ca(2+): Tyr-55, Gly-57, and Gly-59. The active site involves His-75. Asp-76 lines the Ca(2+) pocket. Residue Asp-120 is part of the active site.

The protein belongs to the phospholipase A2 family. Group I subfamily. D49 sub-subfamily. Ca(2+) serves as cofactor. As to expression, expressed by the venom gland.

Its subcellular location is the secreted. It carries out the reaction a 1,2-diacyl-sn-glycero-3-phosphocholine + H2O = a 1-acyl-sn-glycero-3-phosphocholine + a fatty acid + H(+). Snake venom phospholipase A2 (PLA2) that inhibits collagen-induced platelet aggregation. PLA2 catalyzes the calcium-dependent hydrolysis of the 2-acyl groups in 3-sn-phosphoglycerides. The sequence is that of Phospholipase A2 PS22 from Drysdalia coronoides (White-lipped snake).